A 150-amino-acid polypeptide reads, in one-letter code: Deoxyuridine 5'-triphosphate nucleotidohydrolase (150 aa).

Residues 69–71 (RSG), asparagine 82, 86–88 (LID), and lysine 96 contribute to the substrate site.

The protein belongs to the dUTPase family. The cofactor is Mg(2+).

It carries out the reaction dUTP + H2O = dUMP + diphosphate + H(+). The protein operates within pyrimidine metabolism; dUMP biosynthesis; dUMP from dCTP (dUTP route): step 2/2. Functionally, this enzyme is involved in nucleotide metabolism: it produces dUMP, the immediate precursor of thymidine nucleotides and it decreases the intracellular concentration of dUTP so that uracil cannot be incorporated into DNA. The chain is Deoxyuridine 5'-triphosphate nucleotidohydrolase from Neisseria gonorrhoeae (strain ATCC 700825 / FA 1090).